The following is a 401-amino-acid chain: Anhydro-N-acetylmuramic acid kinase (401 aa).

25–32 is an ATP binding site; it reads GTSLDGLD.

Belongs to the anhydro-N-acetylmuramic acid kinase family.

The enzyme catalyses 1,6-anhydro-N-acetyl-beta-muramate + ATP + H2O = N-acetyl-D-muramate 6-phosphate + ADP + H(+). Its pathway is amino-sugar metabolism; 1,6-anhydro-N-acetylmuramate degradation. It functions in the pathway cell wall biogenesis; peptidoglycan recycling. In terms of biological role, catalyzes the specific phosphorylation of 1,6-anhydro-N-acetylmuramic acid (anhMurNAc) with the simultaneous cleavage of the 1,6-anhydro ring, generating MurNAc-6-P. Is required for the utilization of anhMurNAc either imported from the medium or derived from its own cell wall murein, and thus plays a role in cell wall recycling. This Pseudoalteromonas atlantica (strain T6c / ATCC BAA-1087) protein is Anhydro-N-acetylmuramic acid kinase.